Here is a 475-residue protein sequence, read N- to C-terminus: Ribulose bisphosphate carboxylase large chain (475 aa).

Residues 1-2 constitute a propeptide that is removed on maturation; sequence MS. An N-acetylproline modification is found at Pro3. Lys14 is modified (N6,N6,N6-trimethyllysine). 2 residues coordinate substrate: Asn123 and Thr173. The active-site Proton acceptor is the Lys175. A substrate-binding site is contributed by Lys177. Mg(2+) is bound by residues Lys201, Asp203, and Glu204. Lys201 is subject to N6-carboxylysine. His294 acts as the Proton acceptor in catalysis. Substrate contacts are provided by Arg295, His327, and Ser379.

This sequence belongs to the RuBisCO large chain family. Type I subfamily. In terms of assembly, heterohexadecamer of 8 large chains and 8 small chains; disulfide-linked. The disulfide link is formed within the large subunit homodimers. It depends on Mg(2+) as a cofactor. Post-translationally, the disulfide bond which can form in the large chain dimeric partners within the hexadecamer appears to be associated with oxidative stress and protein turnover.

It localises to the plastid. The protein localises to the chloroplast. It carries out the reaction 2 (2R)-3-phosphoglycerate + 2 H(+) = D-ribulose 1,5-bisphosphate + CO2 + H2O. The catalysed reaction is D-ribulose 1,5-bisphosphate + O2 = 2-phosphoglycolate + (2R)-3-phosphoglycerate + 2 H(+). In terms of biological role, ruBisCO catalyzes two reactions: the carboxylation of D-ribulose 1,5-bisphosphate, the primary event in carbon dioxide fixation, as well as the oxidative fragmentation of the pentose substrate in the photorespiration process. Both reactions occur simultaneously and in competition at the same active site. This chain is Ribulose bisphosphate carboxylase large chain, found in Corylus cornuta (Beaked hazel).